A 283-amino-acid chain; its full sequence is Acetylglutamate kinase (283 aa).

Substrate contacts are provided by residues 64–65 (GG), R86, and N181.

The protein belongs to the acetylglutamate kinase family. ArgB subfamily.

Its subcellular location is the cytoplasm. It catalyses the reaction N-acetyl-L-glutamate + ATP = N-acetyl-L-glutamyl 5-phosphate + ADP. Its pathway is amino-acid biosynthesis; L-arginine biosynthesis; N(2)-acetyl-L-ornithine from L-glutamate: step 2/4. Functionally, catalyzes the ATP-dependent phosphorylation of N-acetyl-L-glutamate. In Sulfurovum sp. (strain NBC37-1), this protein is Acetylglutamate kinase.